The sequence spans 301 residues: NADH-cytochrome b5 reductase 2 (301 aa).

A helical transmembrane segment spans residues 14–30 (FLVPFAGATALSIGLAL). One can recognise an FAD-binding FR-type domain in the interval 51–155 (NEWVDLKLSK…KGPIVKWKWE (105 aa)). Residue 158 to 193 (QFKSIALIGGGTGITPLYQLLHQITSNPKDNTKVNL) participates in FAD binding.

It belongs to the flavoprotein pyridine nucleotide cytochrome reductase family. It depends on FAD as a cofactor.

The protein resides in the mitochondrion outer membrane. The enzyme catalyses 2 Fe(III)-[cytochrome b5] + NADH = 2 Fe(II)-[cytochrome b5] + NAD(+) + H(+). Functionally, may mediate the reduction of outer membrane cytochrome b5. The polypeptide is NADH-cytochrome b5 reductase 2 (MCR1) (Candida albicans (strain SC5314 / ATCC MYA-2876) (Yeast)).